Reading from the N-terminus, the 601-residue chain is MVKQENIRNFCIIAHIDHGKSTLADRILELTQVVSQREARQQYLDRMDLERERGITIKAQTVRIPYIAADGQEYELNLIDTPGHVDFNYEVSRSLAACEGALLVVDATQGVEAQTLANVYLALDHDHEVIPVLNKIDLPSAEVDRVKAEIEESIGLDCSQALPVSAKTGMGVDAVLEAIVHHLPAPKGDRAAPLKALIFDSWYDSYQGVVVLFRIMDGSVRKGDTVRLMSTGKEYEVLRLGVFSPEPTDVKELFAGEVGFLCGSIKELGDARVGDTITHADRPAETAVPGFKEVKAMVFCGLYPTESEDYENLKAALEKLQLNDAAFSYEPETSQALGFGFRCGFLGLLHMEIIQERLEREFEVGLIATAPSVVYKVVTMDGKTLEIDNPSHLPDPTKIDTLYEPYVSMDIHVPNEYVGNVMKLCEEKRGTQKNLHYLAANRVVVTYELPFAEIVYDFFDRLKSATRGYASMDYHPLDYRASDLVRLDIMLNSEPVDALAVIVHRDRAYTYGRGLALKLKRTIPRQLFQVAIQAAIGQKIIARETVSAFRKDVTAKCYGGDISRKRKLLEKQKEGKRRMKRMGNVELPQEAFLAALKVGDE.

Positions 5-187 constitute a tr-type G domain; sequence ENIRNFCIIA…AIVHHLPAPK (183 aa). GTP-binding positions include 17–22 and 134–137; these read DHGKST and NKID.

The protein belongs to the TRAFAC class translation factor GTPase superfamily. Classic translation factor GTPase family. LepA subfamily.

It is found in the cell inner membrane. It catalyses the reaction GTP + H2O = GDP + phosphate + H(+). Required for accurate and efficient protein synthesis under certain stress conditions. May act as a fidelity factor of the translation reaction, by catalyzing a one-codon backward translocation of tRNAs on improperly translocated ribosomes. Back-translocation proceeds from a post-translocation (POST) complex to a pre-translocation (PRE) complex, thus giving elongation factor G a second chance to translocate the tRNAs correctly. Binds to ribosomes in a GTP-dependent manner. In Desulfovibrio desulfuricans (strain ATCC 27774 / DSM 6949 / MB), this protein is Elongation factor 4.